The chain runs to 195 residues: Imidazoleglycerol-phosphate dehydratase (195 aa).

Belongs to the imidazoleglycerol-phosphate dehydratase family.

It localises to the cytoplasm. The enzyme catalyses D-erythro-1-(imidazol-4-yl)glycerol 3-phosphate = 3-(imidazol-4-yl)-2-oxopropyl phosphate + H2O. It participates in amino-acid biosynthesis; L-histidine biosynthesis; L-histidine from 5-phospho-alpha-D-ribose 1-diphosphate: step 6/9. The polypeptide is Imidazoleglycerol-phosphate dehydratase (Dechloromonas aromatica (strain RCB)).